Here is a 41-residue protein sequence, read N- to C-terminus: Giant hemoglobin AI chain (41 aa).

Positions D2–P41 constitute a Globin domain.

Belongs to the globin family. In terms of assembly, giant hemoglobin is composed of four heme-containing chains (AI to AIV), and two linker chains (AV and AVI).

The protein is Giant hemoglobin AI chain of Lamellibrachia sp. (Deep-sea giant tube worm).